Reading from the N-terminus, the 909-residue chain is Probable dipeptidyl-aminopeptidase B (909 aa).

The tract at residues 1-63 (MRVGSRINDE…HNHNGRAQGN (63 aa)) is disordered. The Cytoplasmic segment spans residues 1 to 94 (MRVGSRINDE…NGKSNQRRTL (94 aa)). Over residues 27–38 (DSSSTASISLTL) the composition is skewed to low complexity. Residues 95 to 115 (IVFWLLVALCVGGWAVAFLFF) traverse the membrane as a helical; Signal-anchor for type II membrane protein segment. Topologically, residues 116–909 (VTSPGNKTST…YSNFLPIRSF (794 aa)) are vacuolar. Asn-121 carries N-linked (GlcNAc...) asparagine glycosylation. Positions 123-134 (TSTSPHSGSNSP) are enriched in polar residues. Residues 123 to 144 (TSTSPHSGSNSPEGDVTKPGIP) are disordered. 3 N-linked (GlcNAc...) asparagine glycosylation sites follow: Asn-207, Asn-303, and Asn-355. Ser-760 serves as the catalytic Charge relay system. N-linked (GlcNAc...) asparagine glycans are attached at residues Asn-814, Asn-819, and Asn-822. Catalysis depends on charge relay system residues Asp-837 and His-870. The N-linked (GlcNAc...) asparagine glycan is linked to Asn-888.

The protein belongs to the peptidase S9B family.

It localises to the vacuole membrane. The enzyme catalyses Release of an N-terminal dipeptide, Xaa-Yaa-|-Zaa-, from a polypeptide, preferentially when Yaa is Pro, provided Zaa is neither Pro nor hydroxyproline.. Its function is as follows. Type IV dipeptidyl-peptidase which removes N-terminal dipeptides sequentially from polypeptides having unsubstituted N-termini provided that the penultimate residue is proline. This chain is Probable dipeptidyl-aminopeptidase B (DAPB), found in Arthroderma benhamiae (strain ATCC MYA-4681 / CBS 112371) (Trichophyton mentagrophytes).